We begin with the raw amino-acid sequence, 1024 residues long: Beta-galactosidase (1024 aa).

Asn-103 and Asp-202 together coordinate substrate. Asp-202 is a binding site for Na(+). Positions 417, 419, and 462 each coordinate Mg(2+). Substrate contacts are provided by residues Glu-462 and 538 to 541 (EYAH). Glu-462 acts as the Proton donor in catalysis. The Nucleophile role is filled by Glu-538. Asn-598 is a Mg(2+) binding site. Na(+) is bound by residues Phe-602 and Asn-605. 2 residues coordinate substrate: Asn-605 and Trp-1000.

It belongs to the glycosyl hydrolase 2 family. As to quaternary structure, homotetramer. Mg(2+) serves as cofactor. It depends on Na(+) as a cofactor.

It catalyses the reaction Hydrolysis of terminal non-reducing beta-D-galactose residues in beta-D-galactosides.. The chain is Beta-galactosidase from Escherichia coli O127:H6 (strain E2348/69 / EPEC).